A 563-amino-acid chain; its full sequence is BOS complex subunit NCLN (563 aa).

An N-terminal signal peptide occupies residues 1–42 (MLEEAGEVLENVLKASCLPLGFIVFLPAVLLLVAPPLPAADA). Residues 43–522 (AHEFTVYRMQ…VMNAYRVKPA (480 aa)) lie on the Lumenal side of the membrane. Residues N241 and N428 are each glycosylated (N-linked (GlcNAc...) asparagine). A helical transmembrane segment spans residues 523 to 543 (IFDLLLALCIGAYLGMAYTAV). Residues 544 to 563 (QHFHVLYKTVQRLLLKAKAQ) are Cytoplasmic-facing.

It belongs to the nicastrin family. In terms of assembly, component of the back of Sec61 (BOS) complex, composed of NCLN/Nicalin, NOMO1 and TMEM147. The BOS complex is part of the multi-pass translocon (MPT) complex, composed of three subcomplexes, the GEL complex (composed of RAB5IF/OPTI and TMCO1), the BOS complex (composed of NCLN/Nicalin, NOMO1 and TMEM147) and the PAT complex (composed of WDR83OS/Asterix and CCDC47). The MPT complex associates with the SEC61 complex.

The protein localises to the endoplasmic reticulum membrane. Component of the multi-pass translocon (MPT) complex that mediates insertion of multi-pass membrane proteins into the lipid bilayer of membranes. The MPT complex takes over after the SEC61 complex: following membrane insertion of the first few transmembrane segments of proteins by the SEC61 complex, the MPT complex occludes the lateral gate of the SEC61 complex to promote insertion of subsequent transmembrane regions. May antagonize Nodal signaling and subsequent organization of axial structures during mesodermal patterning, via its interaction with NOMO. In Mus musculus (Mouse), this protein is BOS complex subunit NCLN (Ncln).